The sequence spans 495 residues: Taxoid 2-alpha-hydroxylase (495 aa).

The chain crosses the membrane as a helical span at residues 17 to 37 (LQSSAILLTVVSGIIVIVILL). Residue Cys441 participates in heme binding.

This sequence belongs to the cytochrome P450 family.

The protein resides in the microsome membrane. It catalyses the reaction taxusin + reduced [NADPH--hemoprotein reductase] + O2 = 2alpha-hydroxytaxusin + oxidized [NADPH--hemoprotein reductase] + H2O + H(+). It carries out the reaction 7beta-hydroxytaxusin + reduced [NADPH--hemoprotein reductase] + O2 = 2alpha,7beta-dihydroxytaxusin + oxidized [NADPH--hemoprotein reductase] + H2O + H(+). The protein operates within alkaloid biosynthesis; taxol biosynthesis. Functionally, catalyzes the conversion of taxusin to 2-alpha-hydroxytaxusin in taxol biosynthesis. Catalyzes the conversion of 7-beta-hydroxytaxusin to 2-alpha-7-beta-hydroxytaxusin in taxol biosynthesis. This chain is Taxoid 2-alpha-hydroxylase, found in Taxus canadensis (Canadian yew).